A 244-amino-acid chain; its full sequence is Probable H/ACA ribonucleoprotein complex subunit 1-like protein (244 aa).

Disordered stretches follow at residues 1 to 53 (MSFR…GGYD) and 145 to 244 (FLPQ…TKFE). RGG-box stretches follow at residues 4–51 (RGGR…GRGG) and 153–222 (RGRG…RGRG). Basic and acidic residues predominate over residues 160–173 (RGGDRGGRGSDRGG). Composition is skewed to gly residues over residues 174–201 (RGGF…GGFR) and 208–217 (FRGGRGGDFG). The segment covering 218 to 228 (GRGRGDFKRSY) has biased composition (basic and acidic residues).

It belongs to the GAR1 family. As to quaternary structure, component of the small nucleolar ribonucleoprotein particle containing H/ACA-type snoRNAs (H/ACA snoRNPs).

The protein localises to the nucleus. It is found in the nucleolus. Functionally, required for ribosome biogenesis. Part of a complex which catalyzes pseudouridylation of rRNA. This involves the isomerization of uridine such that the ribose is subsequently attached to C5, instead of the normal N1. Pseudouridine ('psi') residues may serve to stabilize the conformation of rRNAs. Involved in phase separation into sub-nucleolar condensates. Essential for normal development and also plays a role in fertility. The polypeptide is Probable H/ACA ribonucleoprotein complex subunit 1-like protein (Caenorhabditis elegans).